Here is a 91-residue protein sequence, read N- to C-terminus: Large ribosomal subunit protein uL23 (91 aa).

The protein belongs to the universal ribosomal protein uL23 family. As to quaternary structure, part of the 50S ribosomal subunit. Contacts protein L29, and trigger factor when it is bound to the ribosome.

Its function is as follows. One of the early assembly proteins it binds 23S rRNA. One of the proteins that surrounds the polypeptide exit tunnel on the outside of the ribosome. Forms the main docking site for trigger factor binding to the ribosome. This is Large ribosomal subunit protein uL23 from Staphylococcus haemolyticus (strain JCSC1435).